Reading from the N-terminus, the 130-residue chain is Small ribosomal subunit protein uS8 (130 aa).

Belongs to the universal ribosomal protein uS8 family. As to quaternary structure, part of the 30S ribosomal subunit.

One of the primary rRNA binding proteins, it binds directly to 16S rRNA central domain where it helps coordinate assembly of the platform of the 30S subunit. The chain is Small ribosomal subunit protein uS8 from Thermococcus sibiricus (strain DSM 12597 / MM 739).